The chain runs to 273 residues: Kit ligand (273 aa).

The first 25 residues, 1-25 (MKKTQTWIITCIYLQLLLFNPLVKT), serve as a signal peptide directing secretion. Gln26 carries the post-translational modification Pyrrolidone carboxylic acid. Residues 26–214 (QEICRNPVTD…AKSPEDPGLQ (189 aa)) lie on the Extracellular side of the membrane. 2 cysteine pairs are disulfide-bonded: Cys29/Cys114 and Cys68/Cys163. The N-linked (GlcNAc...) asparagine; partial glycan is linked to Asn90. N-linked (GlcNAc...) asparagine glycosylation is present at Asn145. Ser167 carries an O-linked (GalNAc...) serine glycan. O-linked (GalNAc...) threonine glycosylation is found at Thr168 and Thr180. Residues 190–211 (ASSLRNDSSSSNRKAAKSPEDP) form a disordered region. Residues 191-202 (SSLRNDSSSSNR) show a composition bias toward low complexity. N-linked (GlcNAc...) asparagine glycosylation is present at Asn195. Residues 215–237 (WTAMALPALISLVIGFAFGALYW) traverse the membrane as a helical segment. Residues 238–273 (KKKQSSLTRAVENIQINEEDNEISMLQQKEREFQEV) lie on the Cytoplasmic side of the membrane.

The protein belongs to the SCF family. In terms of assembly, homodimer, non-covalently linked. Heterotetramer with KIT, binding two KIT molecules; thereby mediates KIT dimerization and subsequent activation by autophosphorylation. Post-translationally, a soluble form is produced by proteolytic processing of isoform 1 in the extracellular domain. In terms of processing, the identity of N- and O-linked saccharides is not reported in PubMed:1708771. The O-linked polysaccharides are probably the mucin type linked to GalNAc.

It localises to the cell membrane. The protein localises to the cytoplasm. It is found in the cytoskeleton. The protein resides in the cell projection. Its subcellular location is the lamellipodium. It localises to the filopodium. The protein localises to the secreted. Functionally, ligand for the receptor-type protein-tyrosine kinase KIT. Plays an essential role in the regulation of cell survival and proliferation, hematopoiesis, stem cell maintenance, gametogenesis, mast cell development, migration and function, and in melanogenesis. KITLG/SCF binding can activate several signaling pathways. Promotes phosphorylation of PIK3R1, the regulatory subunit of phosphatidylinositol 3-kinase, and subsequent activation of the kinase AKT1. KITLG/SCF and KIT also transmit signals via GRB2 and activation of RAS, RAF1 and the MAP kinases MAPK1/ERK2 and/or MAPK3/ERK1. KITLG/SCF and KIT promote activation of STAT family members STAT1, STAT3 and STAT5. KITLG/SCF and KIT promote activation of PLCG1, leading to the production of the cellular signaling molecules diacylglycerol and inositol 1,4,5-trisphosphate. KITLG/SCF acts synergistically with other cytokines, probably interleukins. This Rattus norvegicus (Rat) protein is Kit ligand (Kitlg).